A 250-amino-acid chain; its full sequence is MADS-box transcription factor 47 (250 aa).

Positions M1–R10 are enriched in gly residues. Disordered stretches follow at residues M1–G20 and S196–K250. Over residues G11–G20 the composition is skewed to basic and acidic residues. Positions G20–S80 constitute an MADS-box domain. In terms of domain architecture, K-box spans Q106 to M198. Residues G214–S224 show a composition bias toward polar residues.

In terms of assembly, may interact with MADS18. In terms of tissue distribution, expressed in roots, shoots and developing panicles. Expressed in mature stems and leaves, flowering panicles, developing seeds, and mature seeds.

The protein resides in the nucleus. In terms of biological role, transcription factor that modulates expressions of multiple genes involved in cell signaling and gene transcription. Plays a negative regulatory role in brassinosteroid signaling. The sequence is that of MADS-box transcription factor 47 from Oryza sativa subsp. japonica (Rice).